Here is a 691-residue protein sequence, read N- to C-terminus: Zinc finger protein 770 (691 aa).

Lysine 11 participates in a covalent cross-link: Glycyl lysine isopeptide (Lys-Gly) (interchain with G-Cter in SUMO2). 3 consecutive C2H2-type zinc fingers follow at residues 27–49 (YVCN…YLIH), 55–77 (FECD…QLTH), and 81–103 (FKCS…QQLH). Residues lysine 112, lysine 121, and lysine 146 each participate in a glycyl lysine isopeptide (Lys-Gly) (interchain with G-Cter in SUMO2) cross-link. 3 C2H2-type zinc fingers span residues 160-182 (HACT…VLIH), 188-210 (FKCV…QLTH), and 216-238 (FQCC…KQIH). The segment at 258 to 277 (PLPNKLNANQGGFENGEIGE) is disordered. Lysine 262 participates in a covalent cross-link: Glycyl lysine isopeptide (Lys-Gly) (interchain with G-Cter in SUMO2). A C2H2-type 7; degenerate zinc finger spans residues 294 to 318 (FQCPKCEKCFESEQILNEHSCFAAR). Glycyl lysine isopeptide (Lys-Gly) (interchain with G-Cter in SUMO2) cross-links involve residues lysine 420 and lysine 437. 4 C2H2-type zinc fingers span residues 475–497 (CPCD…YLIH), 503–525 (FGCN…EQTH), 625–647 (YRCS…YLIH), and 653–675 (FECS…QLTH). A Glycyl lysine isopeptide (Lys-Gly) (interchain with G-Cter in SUMO2) cross-link involves residue lysine 683.

This sequence belongs to the krueppel C2H2-type zinc-finger protein family.

Its subcellular location is the nucleus. May be involved in transcriptional regulation. This Homo sapiens (Human) protein is Zinc finger protein 770 (ZNF770).